We begin with the raw amino-acid sequence, 202 residues long: Large ribosomal subunit protein eL13 (202 aa).

Residues 183–202 (GIREKRAKEKAEAEAEKAKK) form a disordered region.

Belongs to the eukaryotic ribosomal protein eL13 family. As to quaternary structure, component of the large ribosomal subunit. Mature ribosomes consist of a small (40S) and a large (60S) subunit. The 40S subunit contains about 32 different proteins and 1 molecule of RNA (18S). The 60S subunit contains 45 different proteins and 3 molecules of RNA (25S, 5.8S and 5S).

It localises to the cytoplasm. Its function is as follows. Component of the ribosome, a large ribonucleoprotein complex responsible for the synthesis of proteins in the cell. The small ribosomal subunit (SSU) binds messenger RNAs (mRNAs) and translates the encoded message by selecting cognate aminoacyl-transfer RNA (tRNA) molecules. The large subunit (LSU) contains the ribosomal catalytic site termed the peptidyl transferase center (PTC), which catalyzes the formation of peptide bonds, thereby polymerizing the amino acids delivered by tRNAs into a polypeptide chain. The nascent polypeptides leave the ribosome through a tunnel in the LSU and interact with protein factors that function in enzymatic processing, targeting, and the membrane insertion of nascent chains at the exit of the ribosomal tunnel. The chain is Large ribosomal subunit protein eL13 from Candida albicans (strain SC5314 / ATCC MYA-2876) (Yeast).